The primary structure comprises 1383 residues: DNA-directed RNA polymerase subunit beta'' (1383 aa).

Zn(2+) is bound by residues Cys-220, Cys-289, Cys-296, and Cys-299.

This sequence belongs to the RNA polymerase beta' chain family. RpoC2 subfamily. As to quaternary structure, in plastids the minimal PEP RNA polymerase catalytic core is composed of four subunits: alpha, beta, beta', and beta''. When a (nuclear-encoded) sigma factor is associated with the core the holoenzyme is formed, which can initiate transcription. Zn(2+) serves as cofactor.

Its subcellular location is the plastid. The protein resides in the chloroplast. It catalyses the reaction RNA(n) + a ribonucleoside 5'-triphosphate = RNA(n+1) + diphosphate. Its function is as follows. DNA-dependent RNA polymerase catalyzes the transcription of DNA into RNA using the four ribonucleoside triphosphates as substrates. The protein is DNA-directed RNA polymerase subunit beta'' of Oenothera elata subsp. hookeri (Hooker's evening primrose).